The primary structure comprises 212 residues: Deoxyribose-phosphate aldolase (212 aa).

D90 (proton donor/acceptor) is an active-site residue. Residue K151 is the Schiff-base intermediate with acetaldehyde of the active site. The Proton donor/acceptor role is filled by K176.

This sequence belongs to the DeoC/FbaB aldolase family. DeoC type 1 subfamily.

It is found in the cytoplasm. It catalyses the reaction 2-deoxy-D-ribose 5-phosphate = D-glyceraldehyde 3-phosphate + acetaldehyde. It functions in the pathway carbohydrate degradation; 2-deoxy-D-ribose 1-phosphate degradation; D-glyceraldehyde 3-phosphate and acetaldehyde from 2-deoxy-alpha-D-ribose 1-phosphate: step 2/2. Its function is as follows. Catalyzes a reversible aldol reaction between acetaldehyde and D-glyceraldehyde 3-phosphate to generate 2-deoxy-D-ribose 5-phosphate. This Halobacterium salinarum (strain ATCC 29341 / DSM 671 / R1) protein is Deoxyribose-phosphate aldolase.